A 314-amino-acid polypeptide reads, in one-letter code: Cytochrome b558/566 subunit B (314 aa).

8 consecutive transmembrane segments (helical) span residues 47 to 67 (LLLV…LIVS), 76 to 96 (SLIP…IPNY), 102 to 122 (LYSL…EGLI), 127 to 147 (LSIL…ASIL), 155 to 175 (LFIS…AYVI), 186 to 206 (YIAI…ENII), 233 to 253 (HITL…TSLI), and 264 to 284 (FLII…IYML).

Its subcellular location is the cell membrane. The chain is Cytochrome b558/566 subunit B (cbsB) from Saccharolobus solfataricus (strain ATCC 35092 / DSM 1617 / JCM 11322 / P2) (Sulfolobus solfataricus).